The sequence spans 37 residues: Large ribosomal subunit protein bL36 (37 aa).

Belongs to the bacterial ribosomal protein bL36 family.

This Streptomyces avermitilis (strain ATCC 31267 / DSM 46492 / JCM 5070 / NBRC 14893 / NCIMB 12804 / NRRL 8165 / MA-4680) protein is Large ribosomal subunit protein bL36.